Reading from the N-terminus, the 139-residue chain is Small ribosomal subunit protein uS19 (139 aa).

The protein belongs to the universal ribosomal protein uS19 family.

Its function is as follows. Protein S19 forms a complex with S13 that binds strongly to the 16S ribosomal RNA. The sequence is that of Small ribosomal subunit protein uS19 from Methanoregula boonei (strain DSM 21154 / JCM 14090 / 6A8).